A 356-amino-acid chain; its full sequence is MTDSSHDGVPAPRRILLVTGLSGAGKSSILRILEDLGYEVIDNPPLGMMDEIVTRAEQPVAIGVDSRTRGFDAAAVLAALGRLRVNPDLQAELIYATAEESVLLRRYTATRRRHPLAMRGTVKEGIEAEIELTARLRAAADMVIDTSDLPPPELRQVVEMRFAPRHDRMAEGLTVALMSFAFPAGLPREADMVFDARFLRNPYYDPDLSVRNGLDQAVADYVASDPDYPRFLDQIDGMLGLVLPRFVREGKKYATIAIGCSGGRHRSVTLVEALARRLAAKNLAEPGGTCDSPGKPAHIEKGAAPTDVQSGGADAQGAWPIIVMHRELARQGRSSWRWASRPREHAADVVEGQYSS.

20-27 (GLSGAGKS) serves as a coordination point for ATP. Residue 65-68 (DSRT) coordinates GTP. Residues 285–313 (EPGGTCDSPGKPAHIEKGAAPTDVQSGGA) are disordered.

The protein belongs to the RapZ-like family.

Functionally, displays ATPase and GTPase activities. The sequence is that of Nucleotide-binding protein GDI1189/Gdia_1902 from Gluconacetobacter diazotrophicus (strain ATCC 49037 / DSM 5601 / CCUG 37298 / CIP 103539 / LMG 7603 / PAl5).